The chain runs to 196 residues: DnaA initiator-associating protein DiaA (196 aa).

Residues 34–196 (LVHSLLNGNK…DNTLFPHQDD (163 aa)) form the SIS domain.

The protein belongs to the SIS family. DiaA subfamily. In terms of assembly, homotetramer; dimer of dimers.

Required for the timely initiation of chromosomal replication via direct interactions with the DnaA initiator protein. The polypeptide is DnaA initiator-associating protein DiaA (Citrobacter koseri (strain ATCC BAA-895 / CDC 4225-83 / SGSC4696)).